Consider the following 290-residue polypeptide: Malonyl-[acyl-carrier protein] O-methyltransferase (290 aa).

It belongs to the methyltransferase superfamily.

The enzyme catalyses malonyl-[ACP] + S-adenosyl-L-methionine = malonyl-[ACP] methyl ester + S-adenosyl-L-homocysteine. It functions in the pathway cofactor biosynthesis; biotin biosynthesis. Functionally, converts the free carboxyl group of a malonyl-thioester to its methyl ester by transfer of a methyl group from S-adenosyl-L-methionine (SAM). It allows to synthesize pimeloyl-ACP via the fatty acid synthetic pathway. The protein is Malonyl-[acyl-carrier protein] O-methyltransferase of Gallionella capsiferriformans (strain ES-2) (Gallionella ferruginea capsiferriformans (strain ES-2)).